A 353-amino-acid chain; its full sequence is Alanine racemase (353 aa).

The Proton acceptor; specific for D-alanine role is filled by Lys34. The residue at position 34 (Lys34) is an N6-(pyridoxal phosphate)lysine. Arg128 serves as a coordination point for substrate. Tyr251 functions as the Proton acceptor; specific for L-alanine in the catalytic mechanism. A substrate-binding site is contributed by Met299.

Belongs to the alanine racemase family. The cofactor is pyridoxal 5'-phosphate.

It carries out the reaction L-alanine = D-alanine. It participates in amino-acid biosynthesis; D-alanine biosynthesis; D-alanine from L-alanine: step 1/1. Catalyzes the interconversion of L-alanine and D-alanine. May also act on other amino acids. The sequence is that of Alanine racemase (alr) from Alcanivorax borkumensis (strain ATCC 700651 / DSM 11573 / NCIMB 13689 / SK2).